A 130-amino-acid chain; its full sequence is Small ribosomal subunit protein uS9 (130 aa).

It belongs to the universal ribosomal protein uS9 family.

The polypeptide is Small ribosomal subunit protein uS9 (Burkholderia mallei (strain NCTC 10247)).